We begin with the raw amino-acid sequence, 154 residues long: Superoxide dismutase [Cu-Zn] (154 aa).

Positions 47, 49, and 64 each coordinate Cu cation. A disulfide bridge connects residues cysteine 58 and cysteine 147. Zn(2+) is bound by residues histidine 64, histidine 72, histidine 81, and aspartate 84. Residue histidine 121 coordinates Cu cation. The span at 125-137 shows a compositional bias: basic and acidic residues; that stretch reads DDLGRGGNEESKK. The tract at residues 125–147 is disordered; that stretch reads DDLGRGGNEESKKTGNAGPRPAC. Arginine 144 lines the substrate pocket.

Homodimer. Cu cation serves as cofactor. Requires Zn(2+) as cofactor.

It is found in the cytoplasm. It carries out the reaction 2 superoxide + 2 H(+) = H2O2 + O2. Its function is as follows. Destroys radicals which are normally produced within the cells and which are toxic to biological systems. The polypeptide is Superoxide dismutase [Cu-Zn] (Aspergillus niger).